Consider the following 89-residue polypeptide: Small ribosomal subunit protein uS14 (89 aa).

The protein belongs to the universal ribosomal protein uS14 family. Part of the 30S ribosomal subunit. Contacts proteins S3 and S10.

Its function is as follows. Binds 16S rRNA, required for the assembly of 30S particles and may also be responsible for determining the conformation of the 16S rRNA at the A site. This is Small ribosomal subunit protein uS14 from Akkermansia muciniphila (strain ATCC BAA-835 / DSM 22959 / JCM 33894 / BCRC 81048 / CCUG 64013 / CIP 107961 / Muc).